Here is a 236-residue protein sequence, read N- to C-terminus: Phosphoribosylaminoimidazole-succinocarboxamide synthase (236 aa).

This sequence belongs to the SAICAR synthetase family.

The enzyme catalyses 5-amino-1-(5-phospho-D-ribosyl)imidazole-4-carboxylate + L-aspartate + ATP = (2S)-2-[5-amino-1-(5-phospho-beta-D-ribosyl)imidazole-4-carboxamido]succinate + ADP + phosphate + 2 H(+). Its pathway is purine metabolism; IMP biosynthesis via de novo pathway; 5-amino-1-(5-phospho-D-ribosyl)imidazole-4-carboxamide from 5-amino-1-(5-phospho-D-ribosyl)imidazole-4-carboxylate: step 1/2. In Rickettsia canadensis (strain McKiel), this protein is Phosphoribosylaminoimidazole-succinocarboxamide synthase.